Here is a 161-residue protein sequence, read N- to C-terminus: Aklanonic acid methyl ester cyclase DauD (161 aa).

Gln106 contacts substrate. Positions 137 to 161 (WPTPEGWRPCPPPPRRRHDRSTDTP) are disordered.

The protein belongs to the polyketide cyclase DnrD family. Homotetramer.

The enzyme catalyses methyl aklanonate = aklaviketone. It participates in antibiotic biosynthesis; daunorubicin biosynthesis. The protein operates within antibiotic biosynthesis; carminomycin biosynthesis. It functions in the pathway antibiotic biosynthesis; rhodomycin biosynthesis. Its pathway is antibiotic biosynthesis; aclacinomycin biosynthesis. Involved in the biosynthesis of aklavinone which is an important precursor common to the formation of the clinically significant anthracyclines such as carminomycin, daunorubicin (daunomycin), rhodomycin, aclacinomycin T (aklavin) and aclacinomycin A (aclarubicin). These compounds are aromatic polyketide antibiotics that exhibit high cytotoxicity and are widely applied in the chemotherapy of a variety of cancers. Catalyzes the cyclization of aklanonic acid methyl ester to yield aklaviketone. The protein is Aklanonic acid methyl ester cyclase DauD (dauD) of Streptomyces sp. (strain C5).